Here is a 153-residue protein sequence, read N- to C-terminus: Cofilin (153 aa).

In terms of domain architecture, ADF-H spans 15–147 (GVAVNDSALQ…AYESVLERVS (133 aa)).

This sequence belongs to the actin-binding proteins ADF family.

The protein resides in the cytoplasm. It is found in the cytoskeleton. The protein localises to the nucleus matrix. Its function is as follows. Controls reversibly actin polymerization and depolymerization in a pH-sensitive manner. It has the ability to bind G- and F-actin in a 1:1 ratio of cofilin to actin. Binding to F-actin is regulated by tropomyosin. It is the major component of intranuclear and cytoplasmic actin rods. Required for accumulation of actin at the cell division site via depolymerizing actin at the cell ends. In association with myosin II has a role in the assembly of the contractile ring via severing actin filaments. Involved in the maintenance of the contractile ring once formed. In association with profilin and capping protein, has a role in the mitotic reorganization of the actin cytoskeleton. This Yarrowia lipolytica (strain CLIB 122 / E 150) (Yeast) protein is Cofilin (COF1).